Consider the following 96-residue polypeptide: Large ribosomal subunit protein bL27 (96 aa).

The interval 12-33 is disordered; sequence HKGGGSSANGRNSAGRRLGAKA. Over residues 19–28 the composition is skewed to low complexity; sequence ANGRNSAGRR.

The protein belongs to the bacterial ribosomal protein bL27 family.

The sequence is that of Large ribosomal subunit protein bL27 from Lactobacillus helveticus (strain DPC 4571).